The primary structure comprises 653 residues: Thioredoxin domain-containing protein 3 homolog (653 aa).

A Thioredoxin domain is found at 9 to 114 (LQETLNTQEA…QETIQETLKN (106 aa)). A disulfide bridge links cysteine 38 with cysteine 41. Residues 155–299 (KQITVALIKP…FFFPDFKPPT (145 aa)) form an NDK 1 region. Residues 300-323 (YRSAKSAASRASGRRSKTPSQKPR) form a disordered region. Residues 301-310 (RSAKSAASRA) are compositionally biased toward low complexity. NDK stretches follow at residues 324–459 (LQRT…IFHV) and 459–597 (VEQT…QFDW). Positions 603–653 (QAEEGEVNETSGEQPTDEQSGETEKTEEDGEHEGAQSDQQQAVSEAMEKEE) are disordered. Residues 617 to 633 (PTDEQSGETEKTEEDGE) show a composition bias toward acidic residues.

The protein in the C-terminal section; belongs to the NDK family. As to expression, testis-specific.

Its function is as follows. May be required during the final stages of sperm tail maturation. May act by reducing disulfide bonds within the sperm components. This is Thioredoxin domain-containing protein 3 homolog (CiIC3) from Ciona intestinalis (Transparent sea squirt).